The following is a 215-amino-acid chain: Oligoribonuclease (215 aa).

Positions 5-170 (LVWIDCEMTG…ADIHESIREL (166 aa)) constitute an Exonuclease domain. Residue Tyr-127 is part of the active site. A disordered region spans residues 196–215 (LSDGAGAQEETDSAEAPQSG).

It belongs to the oligoribonuclease family.

Its subcellular location is the cytoplasm. Functionally, 3'-to-5' exoribonuclease specific for small oligoribonucleotides. The chain is Oligoribonuclease from Mycobacterium bovis (strain BCG / Pasteur 1173P2).